A 311-amino-acid chain; its full sequence is 3-dehydro-scyllo-inosose hydrolase (311 aa).

Positions 35, 37, 46, 117, and 173 each coordinate Zn(2+).

The protein belongs to the creatininase superfamily. In terms of assembly, homotrimer. It depends on Zn(2+) as a cofactor.

It catalyses the reaction 3-dehydro-scyllo-inosose + H2O = 5-dehydro-L-gluconate + H(+). It functions in the pathway polyol metabolism; myo-inositol metabolism. Its function is as follows. Catalyzes the ring-opening hydrolysis of 3-dehydro-scyllo-inosose (diketo-inositol) to 5-dehydro-L-gluconate, and thus probably functions in a myo-inositol degradation pathway together with IolG, IolM and IolO. In Thermotoga maritima (strain ATCC 43589 / DSM 3109 / JCM 10099 / NBRC 100826 / MSB8), this protein is 3-dehydro-scyllo-inosose hydrolase.